Consider the following 710-residue polypeptide: Methionine--tRNA ligase (710 aa).

Residues 26 to 36 (PYANGQIHIGH) carry the 'HIGH' region motif. 4 residues coordinate Zn(2+): Cys157, Cys160, Cys170, and Cys173. The 'KMSKS' region motif lies at 347 to 351 (KMSKS). Lys350 lines the ATP pocket. Residues 604–710 (DFAKIDLRIA…SGAKPGMRVK (107 aa)) form the tRNA-binding domain.

The protein belongs to the class-I aminoacyl-tRNA synthetase family. MetG type 1 subfamily. As to quaternary structure, homodimer. It depends on Zn(2+) as a cofactor.

The protein localises to the cytoplasm. It catalyses the reaction tRNA(Met) + L-methionine + ATP = L-methionyl-tRNA(Met) + AMP + diphosphate. Functionally, is required not only for elongation of protein synthesis but also for the initiation of all mRNA translation through initiator tRNA(fMet) aminoacylation. This chain is Methionine--tRNA ligase, found in Paraburkholderia xenovorans (strain LB400).